We begin with the raw amino-acid sequence, 473 residues long: High-affinity proline transporter PutP (473 aa).

A run of 12 helical transmembrane segments spans residues 32–52 (LSAGAADMSGWLLMGLPGAMF), 56–76 (LSGAWIVIGLCLGAWANWLYV), 114–134 (IVILVFFTFYVSSGMVSGGVL), 146–166 (GLWIVTGVVVAYTLFGGFLAV), 171–191 (FVQGIIMFAALILVPIVTFFH), 218–238 (VLGIISLFAWGLGYFGQPHII), 256–276 (IGMGWMILSAVGAVLTGLGGI), 299–319 (ILFHPIITGFLISAILAAIMS), 350–370 (LVFLGRLAVLAVSIVALVLAW), 376–396 (ILGLVSYAWAGFGASFGPVVL), 408–428 (GALAGMIVGAATVIIWANAGL), and 431–451 (FLYEMIPGFAASLLSVFFVSI).

It belongs to the sodium:solute symporter (SSF) (TC 2.A.21) family.

The protein resides in the cell membrane. The catalysed reaction is L-proline(in) + Na(+)(in) = L-proline(out) + Na(+)(out). Catalyzes the high-affinity uptake of extracellular proline. Important for the use of proline as a sole carbon and energy source or a sole nitrogen source. In Bacillus subtilis (strain 168), this protein is High-affinity proline transporter PutP.